The following is a 451-amino-acid chain: uncharacterized protein (451 aa).

The HD domain occupies 50–147 (RFEHSLGTMF…DVDADRMDYL (98 aa)).

This is an uncharacterized protein from Methanocaldococcus jannaschii (strain ATCC 43067 / DSM 2661 / JAL-1 / JCM 10045 / NBRC 100440) (Methanococcus jannaschii).